A 200-amino-acid chain; its full sequence is Molybdenum cofactor guanylyltransferase (200 aa).

Residues L15–G17, K28, D74, and D104 contribute to the GTP site. D104 is a binding site for Mg(2+).

Belongs to the MobA family. As to quaternary structure, monomer. Mg(2+) is required as a cofactor.

It is found in the cytoplasm. The enzyme catalyses Mo-molybdopterin + GTP + H(+) = Mo-molybdopterin guanine dinucleotide + diphosphate. Functionally, transfers a GMP moiety from GTP to Mo-molybdopterin (Mo-MPT) cofactor (Moco or molybdenum cofactor) to form Mo-molybdopterin guanine dinucleotide (Mo-MGD) cofactor. The polypeptide is Molybdenum cofactor guanylyltransferase (Pseudomonas fluorescens (strain SBW25)).